Reading from the N-terminus, the 106-residue chain is NADH-quinone oxidoreductase subunit K (106 aa).

Transmembrane regions (helical) follow at residues 8–28, 35–55, and 66–86; these read IGIE…VFGV, IIVF…FVAF, and VFVF…LAIL.

This sequence belongs to the complex I subunit 4L family. As to quaternary structure, NDH-1 is composed of 14 different subunits. Subunits NuoA, H, J, K, L, M, N constitute the membrane sector of the complex.

It is found in the cell inner membrane. It carries out the reaction a quinone + NADH + 5 H(+)(in) = a quinol + NAD(+) + 4 H(+)(out). Its function is as follows. NDH-1 shuttles electrons from NADH, via FMN and iron-sulfur (Fe-S) centers, to quinones in the respiratory chain. The immediate electron acceptor for the enzyme in this species is believed to be a menaquinone. Couples the redox reaction to proton translocation (for every two electrons transferred, four hydrogen ions are translocated across the cytoplasmic membrane), and thus conserves the redox energy in a proton gradient. The chain is NADH-quinone oxidoreductase subunit K from Flavobacterium johnsoniae (strain ATCC 17061 / DSM 2064 / JCM 8514 / BCRC 14874 / CCUG 350202 / NBRC 14942 / NCIMB 11054 / UW101) (Cytophaga johnsonae).